The primary structure comprises 1202 residues: MRPIRMYKNNQERTTTKHQETIEDNQNEQTTSDQRFTRSSNSGKINVERISSSRHQIADGKTMSSYTTNEANYTSKDSVQHGGSSITYTSNTTGNPRVTNARANIDETYATGTVEDLSSTSHGQEPEIESFADRAELAMMIQGMTVGALTVQPMRSIRSTFANLANILIFHDVFATEDKPTSSIEYHSDEMVVNMPKQTYNPIDTVAKILYLPSLEKFKYGTGIVQMNYSSNVSQLFPNTTNIINTITDGLTYANRTEFFIRVMVLFMMDRKILTMDFYDVDASAISNNAILPTIPTITGVSPLLRIDTRTEPIWYNDAIKTLINNLTIQYGKIKTVLDANAVKRYSVVGYPIDQFRAYLYNHNLLEYLGKKVKREDIMSLIKALSYEFDLITISDLEYQNIPKWFSDNDLSRFVFAVCMFPDIIRQFHALNIDYFSQANAFTVKSENSIIKMLNSNQNMEPSIINWFLFRICAIDKTVIDDYFSLEMTPIIMRPKLYDFDMKRGEPVSLLYILELILFSIMFPNVTQHMLGQIQARILFICMYAFRQEYLKFIAKFGFFYKIVNGRKEYIQVANQNERMSENVDVLTGNLYPSLFTDDPTLSSVAPTLAKIARLMKPTTSLTPDERAISAKFPRFKDASHLNPYSSLNVGGRTQHSVTYTRMYDAIDEMFNLILKSFANNFAQRPRAGVTQLKSLLTQLTEPLCLELDGHVYHLYNVMANMMQNFIPNTDGQFHSFRACAYAVVDSGNIYRVVQNGDELNESLVIDTAIVWGLLGNTDNAYGNAIGATGTANVPTKVQPVIPTPDNFITPTIHLKTSIDAVCSVEGILLLILSRQINIPGYEVELDKLRIGISQPKVSERQYQRARESIKNMLGSGDYNIAPLHFLLHTEHRSTRLSKPLIRRVFDNVVQPYVANLDPAEFENTPQLIESSNMTRLQIALKMLTGDMDDIVKGLILHKRACAKFDVYETLTIPNDVQTIVLTMQHISTQTENNIVYYVFLINGVKIFAEDVKNINFQVDTTGIWPEHVVTLLLRAINNGFNTYISMPNILYKPTITADVRQFLNTTKAEVLLVSNRSVIHEIMFFDNALQPKKSSDTLALSEAVYRTIWNSSVITQRILARGLMNLEDNKPPEAKISQQSELDMGKIDETSGEPIYTSGLKKMDSSKISMFNVVLSAGSDVIRQAAIKYSAVRTQEVILFE.

Disordered regions lie at residues 1 to 45 (MRPI…SGKI) and 73 to 99 (YTSK…PRVT). The span at 10–21 (NQERTTTKHQET) shows a compositional bias: basic and acidic residues. The span at 27–45 (NEQTTSDQRFTRSSNSGKI) shows a compositional bias: polar residues.

It belongs to the turreted BTV-fold inner capsid family. In terms of assembly, homodecamer; each decamer is made up of two conformers of VP2, called VP2A and VP2B. 12 homodecamers assemble to form an icosahedral capsid.

It localises to the virion. Its function is as follows. Inner capsid protein that self-assembles to form an icosahedral capsid with a T=2 symmetry, which consists of 120 copies of VP2, with channels at each of its five-fold vertices. This capsid constitutes the innermost concentric layer of the viral mature particle. This Aedes pseudoscutellaris reovirus (isolate France) (ApRV) protein is Inner capsid protein VP3 (S3).